A 108-amino-acid chain; its full sequence is MWGAFLLYVSMKMGGTAGQSLEQPSEVTAVEGAIVQINCTYQTSGFYGLSWYQQHDGGAPTFLSYNALDGLEETGRFSSFLSRSDSYGYLLLQELQMKDSASYFCAVR.

The first 18 residues, 1–18 (MWGAFLLYVSMKMGGTAG), serve as a signal peptide directing secretion. Positions 19–108 (QSLEQPSEVT…DSASYFCAVR (90 aa)) constitute an Ig-like domain. N-linked (GlcNAc...) asparagine glycosylation is present at N38. Cysteines 39 and 105 form a disulfide.

Alpha-beta TR is a heterodimer composed of an alpha and beta chain; disulfide-linked. The alpha-beta TR is associated with the transmembrane signaling CD3 coreceptor proteins to form the TR-CD3 (TcR or TCR). The assembly of alpha-beta TR heterodimers with CD3 occurs in the endoplasmic reticulum where a single alpha-beta TR heterodimer associates with one CD3D-CD3E heterodimer, one CD3G-CD3E heterodimer and one CD247 homodimer forming a stable octameric structure. CD3D-CD3E and CD3G-CD3E heterodimers preferentially associate with TR alpha and TR beta chains, respectively. The association of the CD247 homodimer is the last step of TcR assembly in the endoplasmic reticulum and is required for transport to the cell surface.

The protein resides in the cell membrane. Functionally, v region of the variable domain of T cell receptor (TR) alpha chain that participates in the antigen recognition. Alpha-beta T cell receptors are antigen specific receptors which are essential to the immune response and are present on the cell surface of T lymphocytes. Recognize peptide-major histocompatibility (MH) (pMH) complexes that are displayed by antigen presenting cells (APC), a prerequisite for efficient T cell adaptive immunity against pathogens. Binding of alpha-beta TR to pMH complex initiates TR-CD3 clustering on the cell surface and intracellular activation of LCK that phosphorylates the ITAM motifs of CD3G, CD3D, CD3E and CD247 enabling the recruitment of ZAP70. In turn ZAP70 phosphorylates LAT, which recruits numerous signaling molecules to form the LAT signalosome. The LAT signalosome propagates signal branching to three major signaling pathways, the calcium, the mitogen-activated protein kinase (MAPK) kinase and the nuclear factor NF-kappa-B (NF-kB) pathways, leading to the mobilization of transcription factors that are critical for gene expression and essential for T cell growth and differentiation. The T cell repertoire is generated in the thymus, by V-(D)-J rearrangement. This repertoire is then shaped by intrathymic selection events to generate a peripheral T cell pool of self-MH restricted, non-autoaggressive T cells. Post-thymic interaction of alpha-beta TR with the pMH complexes shapes TR structural and functional avidity. The protein is T cell receptor alpha variable 1-1 of Homo sapiens (Human).